The sequence spans 538 residues: Carboxypeptidase 2 (538 aa).

The first 21 residues, 1 to 21 (MVAYRFLTLISLGLGSHCVSA), serve as a signal peptide directing secretion. Asn46 carries N-linked (GlcNAc...) asparagine glycosylation. The tract at residues 53 to 76 (PAFTSPGTVSRGFSDGTSGPTRDE) is disordered. The Peptidase M14 domain occupies 71-351 (GPTRDETMEG…VMAKSVLQTA (281 aa)). The Zn(2+) site is built by His136, Glu139, and His224. Catalysis depends on Glu322, which acts as the Proton donor/acceptor. Residues Asn393 and Asn459 are each glycosylated (N-linked (GlcNAc...) asparagine).

Belongs to the peptidase M14 family. Requires Zn(2+) as cofactor.

The protein resides in the secreted. In terms of biological role, extracellular metalloprotease that contributes to pathogenicity. The polypeptide is Carboxypeptidase 2 (MCPB) (Trichophyton rubrum (Athlete's foot fungus)).